The sequence spans 233 residues: Orotidine 5'-phosphate decarboxylase (233 aa).

Substrate contacts are provided by residues D9, K31, 58-67 (DLKLHDIPNT), T120, R182, Q191, G211, and R212. Residue K60 is the Proton donor of the active site.

This sequence belongs to the OMP decarboxylase family. Type 1 subfamily. In terms of assembly, homodimer.

It catalyses the reaction orotidine 5'-phosphate + H(+) = UMP + CO2. It functions in the pathway pyrimidine metabolism; UMP biosynthesis via de novo pathway; UMP from orotate: step 2/2. Its function is as follows. Catalyzes the decarboxylation of orotidine 5'-monophosphate (OMP) to uridine 5'-monophosphate (UMP). In Listeria welshimeri serovar 6b (strain ATCC 35897 / DSM 20650 / CCUG 15529 / CIP 8149 / NCTC 11857 / SLCC 5334 / V8), this protein is Orotidine 5'-phosphate decarboxylase.